The sequence spans 127 residues: Small ribosomal subunit protein uS12 (127 aa).

Aspartate 89 is modified (3-methylthioaspartic acid).

The protein belongs to the universal ribosomal protein uS12 family. As to quaternary structure, part of the 30S ribosomal subunit. Contacts proteins S8 and S17. May interact with IF1 in the 30S initiation complex.

With S4 and S5 plays an important role in translational accuracy. Functionally, interacts with and stabilizes bases of the 16S rRNA that are involved in tRNA selection in the A site and with the mRNA backbone. Located at the interface of the 30S and 50S subunits, it traverses the body of the 30S subunit contacting proteins on the other side and probably holding the rRNA structure together. The combined cluster of proteins S8, S12 and S17 appears to hold together the shoulder and platform of the 30S subunit. This chain is Small ribosomal subunit protein uS12, found in Nautilia profundicola (strain ATCC BAA-1463 / DSM 18972 / AmH).